The following is a 243-amino-acid chain: Tyrosine recombinase XerD-like (243 aa).

The Core-binding (CB) domain occupies 1-72 (MKQAIESFIQ…AVNQFLYFLY (72 aa)). In terms of domain architecture, Tyr recombinase spans 91–243 (SVKKKLERED…KTSMSLEKFR (153 aa)). Active-site residues include Lys-149 and Arg-210.

This sequence belongs to the 'phage' integrase family. XerD-like subfamily.

It is found in the cytoplasm. Putative tyrosine recombinase. Not involved in the cutting and rejoining of the recombining DNA molecules on dif(SL) site. This is Tyrosine recombinase XerD-like from Streptococcus suis (strain 98HAH33).